We begin with the raw amino-acid sequence, 119 residues long: Large ribosomal subunit protein bL20 (119 aa).

It belongs to the bacterial ribosomal protein bL20 family.

In terms of biological role, binds directly to 23S ribosomal RNA and is necessary for the in vitro assembly process of the 50S ribosomal subunit. It is not involved in the protein synthesizing functions of that subunit. This chain is Large ribosomal subunit protein bL20, found in Rhodopseudomonas palustris (strain ATCC BAA-98 / CGA009).